A 147-amino-acid chain; its full sequence is Hemoglobin subunit beta-H1 (147 aa).

Positions 3-147 (HFTAEEKAAI…VANALSHKYH (145 aa)) constitute a Globin domain. Heme b contacts are provided by His-64 and His-93.

It belongs to the globin family. In terms of assembly, heterotetramer of two alpha chains and two beta chains. In terms of tissue distribution, red blood cells.

This is an embryonic beta-type chain. The chain is Hemoglobin subunit beta-H1 (Hbb-bh1) from Mus musculus (Mouse).